A 177-amino-acid chain; its full sequence is ATP synthase subunit delta (177 aa).

Belongs to the ATPase delta chain family. F-type ATPases have 2 components, F(1) - the catalytic core - and F(0) - the membrane proton channel. F(1) has five subunits: alpha(3), beta(3), gamma(1), delta(1), epsilon(1). F(0) has three main subunits: a(1), b(2) and c(10-14). The alpha and beta chains form an alternating ring which encloses part of the gamma chain. F(1) is attached to F(0) by a central stalk formed by the gamma and epsilon chains, while a peripheral stalk is formed by the delta and b chains.

It is found in the cell inner membrane. Its function is as follows. F(1)F(0) ATP synthase produces ATP from ADP in the presence of a proton or sodium gradient. F-type ATPases consist of two structural domains, F(1) containing the extramembraneous catalytic core and F(0) containing the membrane proton channel, linked together by a central stalk and a peripheral stalk. During catalysis, ATP synthesis in the catalytic domain of F(1) is coupled via a rotary mechanism of the central stalk subunits to proton translocation. In terms of biological role, this protein is part of the stalk that links CF(0) to CF(1). It either transmits conformational changes from CF(0) to CF(1) or is implicated in proton conduction. In Shewanella putrefaciens (strain CN-32 / ATCC BAA-453), this protein is ATP synthase subunit delta.